Reading from the N-terminus, the 103-residue chain is Large ribosomal subunit protein bL21 (103 aa).

The protein belongs to the bacterial ribosomal protein bL21 family. In terms of assembly, part of the 50S ribosomal subunit. Contacts protein L20.

Its function is as follows. This protein binds to 23S rRNA in the presence of protein L20. This Salmonella agona (strain SL483) protein is Large ribosomal subunit protein bL21.